The chain runs to 355 residues: Syntaxin-5 (355 aa).

At methionine 1 to arginine 333 the chain is on the cytoplasmic side. The short motif at isoleucine 245 to methionine 247 is the IxM motif; signal for cargo packaging into COPII-coated vesicles element. The 63-residue stretch at aspartate 263–tyrosine 325 folds into the t-SNARE coiled-coil homology domain. The stretch at phenylalanine 287–alanine 318 forms a coiled coil. A helical; Anchor for type IV membrane protein membrane pass occupies residues tryptophan 334–leucine 354. Residue alanine 355 is a topological domain, vesicular.

The protein belongs to the syntaxin family. As to quaternary structure, part of a ternary complex containing STX5A, NSFL1C and VCP. Part of a unique SNARE complex composed of the Golgi SNAREs GOSR1, GOSR2, YKT6 and VTI1A. Component of a SNARE complex consisting of STX5, YKT6, GOSR1 and BET1L. Interacts with BET1L. Interacts with BET1. Interacts with COG4. Interacts with GM130/GOLGA2. Interacts (via IxM motif) with SEC24C and SEC24D; mediates STX5 packaging into COPII-coated vesicles. Interacts with VLDLR; this interaction mediates VLDLR translocation from the endoplasmic reticulum to the plasma membrane.

It localises to the endoplasmic reticulum-Golgi intermediate compartment membrane. The protein localises to the golgi apparatus membrane. Functionally, mediates endoplasmic reticulum to Golgi transport. Together with p115/USO1 and GM130/GOLGA2, involved in vesicle tethering and fusion at the cis-Golgi membrane to maintain the stacked and inter-connected structure of the Golgi apparatus. In terms of biological role, required for Golgi to endoplasmic reticulum retrogade transport, and for intra-Golgi transport. The polypeptide is Syntaxin-5 (Stx5) (Mus musculus (Mouse)).